The primary structure comprises 98 residues: Dehydrin HIRD11 (98 aa).

The disordered stretch occupies residues 1–98 (MAGLINKIGD…HSSSSDSDSD (98 aa)). Over residues 19–72 (KEGEHKKEEEHKKHVDEHKSGEHKEGIVDKIKDKIHGGEGKSHDGEGKSHDGEK) the composition is skewed to basic and acidic residues. Residues 73–82 (KKKKDKKEKK) are compositionally biased toward basic residues.

It belongs to the KS-type dehydrin family. As to quaternary structure, interacts with PXL1. In terms of processing, phosphorylated in vivo. Phosphorylated in vitro by PXL1. Highly expressed in the cambial zone of the stem vasculature (at protein level). Expressed in roots, rosettes leaves, stems, cauline leaves, flowers and siliques.

The protein localises to the cytoplasm. Its subcellular location is the nucleus. Intrinsically disordered and metal-binding protein. Binds to the divalent cations cobalt, nickel, copper and zinc, but not to magnesium, calcium, manganese or cadmium. Binding to metal ions decreases disordered state, decreases susceptibility to trypsin and promotes self-association. Can reduce the formation of reactive oxygen species (ROS) in a copper-ascorbate in vitro system. This is Dehydrin HIRD11 from Arabidopsis thaliana (Mouse-ear cress).